The sequence spans 121 residues: Small ribosomal subunit protein uS13 (121 aa).

The segment at 97–121 (VRGQRTRTNARTRRGARKTVAGKKK) is disordered. A compositionally biased stretch (basic residues) spans 100-121 (QRTRTNARTRRGARKTVAGKKK).

It belongs to the universal ribosomal protein uS13 family. As to quaternary structure, part of the 30S ribosomal subunit. Forms a loose heterodimer with protein S19. Forms two bridges to the 50S subunit in the 70S ribosome.

Its function is as follows. Located at the top of the head of the 30S subunit, it contacts several helices of the 16S rRNA. In the 70S ribosome it contacts the 23S rRNA (bridge B1a) and protein L5 of the 50S subunit (bridge B1b), connecting the 2 subunits; these bridges are implicated in subunit movement. Contacts the tRNAs in the A and P-sites. The protein is Small ribosomal subunit protein uS13 of Prochlorococcus marinus (strain MIT 9303).